A 240-amino-acid polypeptide reads, in one-letter code: Endonuclease NBR9 (240 aa).

The tract at residues 1–24 (MKGTGGVVVGTQNPVRDYNHSTDE) is disordered. Positions 97–173 (IDLHGLYVKE…NSGVLVLELQ (77 aa)) constitute a Smr domain. Residues 181-219 (GPAVNAPTNQYNAQPHPQYNNNGGQPQGQAQNYNNSGND) are disordered. The segment covering 194 to 215 (QPHPQYNNNGGQPQGQAQNYNN) has biased composition (low complexity).

The protein resides in the cytoplasm. Functionally, endonuclease involved in nonstop mRNA decay via the formation of mRNA cleavage fragments in the vicinity of stalled ribosomes. In Saccharomyces cerevisiae (strain ATCC 204508 / S288c) (Baker's yeast), this protein is Endonuclease NBR9.